Here is a 247-residue protein sequence, read N- to C-terminus: ABC-type transporter ATP-binding protein EcsA (247 aa).

Residues 4–234 (LSVKDLTGGY…FGMKDAALDD (231 aa)) form the ABC transporter domain. 36–43 (GLNGAGKS) lines the ATP pocket.

It belongs to the ABC transporter superfamily.

Functionally, has a role in exoprotein production, sporulation and competence. This chain is ABC-type transporter ATP-binding protein EcsA (ecsA), found in Bacillus subtilis (strain 168).